The sequence spans 76 residues: Large ribosomal subunit protein bL31 (76 aa).

Belongs to the bacterial ribosomal protein bL31 family. Type A subfamily. In terms of assembly, part of the 50S ribosomal subunit.

Its function is as follows. Binds the 23S rRNA. This Methylocella silvestris (strain DSM 15510 / CIP 108128 / LMG 27833 / NCIMB 13906 / BL2) protein is Large ribosomal subunit protein bL31.